The chain runs to 146 residues: Transcriptional regulator MraZ (146 aa).

2 consecutive SpoVT-AbrB domains span residues 5-50 (SSFH…TFNE) and 77-120 (ACEC…SREQ).

This sequence belongs to the MraZ family. As to quaternary structure, forms oligomers.

Its subcellular location is the cytoplasm. It localises to the nucleoid. The chain is Transcriptional regulator MraZ from Desulforapulum autotrophicum (strain ATCC 43914 / DSM 3382 / VKM B-1955 / HRM2) (Desulfobacterium autotrophicum).